The following is a 101-amino-acid chain: Threonine-rich inner membrane protein GfcA (101 aa).

Residues 1–21 form the signal peptide; the sequence is MKHKLSAILMAFMLTTPAAFA. Over 22-59 the chain is Cytoplasmic; it reads APEATNGTEATTGTTGTTTTTTGATTTATTTGGVAAGA. The disordered stretch occupies residues 24–45; sequence EATNGTEATTGTTGTTTTTTGA. A helical membrane pass occupies residues 60 to 80; sequence VGTATVVGVATAVGVATLAVV. Residues 81–101 are Periplasmic-facing; sequence AANDSGDGGSHNTSTTTSTTR. The tract at residues 82 to 101 is disordered; it reads ANDSGDGGSHNTSTTTSTTR.

It is found in the cell inner membrane. The sequence is that of Threonine-rich inner membrane protein GfcA (gfcA) from Escherichia coli (strain K12).